The chain runs to 692 residues: Elongation factor G (692 aa).

Residues 8 to 283 (EMTRNIGIMA…AVLDYMPAPT (276 aa)) form the tr-type G domain. GTP-binding positions include 17–24 (AHIDAGKT), 81–85 (DTPGH), and 135–138 (NKMD).

The protein belongs to the TRAFAC class translation factor GTPase superfamily. Classic translation factor GTPase family. EF-G/EF-2 subfamily.

The protein localises to the cytoplasm. Catalyzes the GTP-dependent ribosomal translocation step during translation elongation. During this step, the ribosome changes from the pre-translocational (PRE) to the post-translocational (POST) state as the newly formed A-site-bound peptidyl-tRNA and P-site-bound deacylated tRNA move to the P and E sites, respectively. Catalyzes the coordinated movement of the two tRNA molecules, the mRNA and conformational changes in the ribosome. The protein is Elongation factor G of Citrifermentans bemidjiense (strain ATCC BAA-1014 / DSM 16622 / JCM 12645 / Bem) (Geobacter bemidjiensis).